Reading from the N-terminus, the 98-residue chain is Large ribosomal subunit protein uL23 (98 aa).

This sequence belongs to the universal ribosomal protein uL23 family. In terms of assembly, part of the 50S ribosomal subunit. Contacts protein L29, and trigger factor when it is bound to the ribosome.

One of the early assembly proteins it binds 23S rRNA. One of the proteins that surrounds the polypeptide exit tunnel on the outside of the ribosome. Forms the main docking site for trigger factor binding to the ribosome. This chain is Large ribosomal subunit protein uL23, found in Koribacter versatilis (strain Ellin345).